A 218-amino-acid polypeptide reads, in one-letter code: GTP cyclohydrolase 1 (218 aa).

Positions 109, 112, and 180 each coordinate Zn(2+).

The protein belongs to the GTP cyclohydrolase I family. In terms of assembly, toroid-shaped homodecamer, composed of two pentamers of five dimers.

The catalysed reaction is GTP + H2O = 7,8-dihydroneopterin 3'-triphosphate + formate + H(+). It participates in cofactor biosynthesis; 7,8-dihydroneopterin triphosphate biosynthesis; 7,8-dihydroneopterin triphosphate from GTP: step 1/1. In Aeromonas salmonicida (strain A449), this protein is GTP cyclohydrolase 1.